The following is a 94-amino-acid chain: Putative regulatory protein Tmel_0100 (94 aa).

This sequence belongs to the RemA family.

The protein is Putative regulatory protein Tmel_0100 of Thermosipho melanesiensis (strain DSM 12029 / CIP 104789 / BI429).